A 249-amino-acid chain; its full sequence is 1-(5-phosphoribosyl)-5-[(5-phosphoribosylamino)methylideneamino] imidazole-4-carboxamide isomerase (249 aa).

Catalysis depends on D8, which acts as the Proton acceptor. Catalysis depends on D131, which acts as the Proton donor.

Belongs to the HisA/HisF family.

It localises to the cytoplasm. It carries out the reaction 1-(5-phospho-beta-D-ribosyl)-5-[(5-phospho-beta-D-ribosylamino)methylideneamino]imidazole-4-carboxamide = 5-[(5-phospho-1-deoxy-D-ribulos-1-ylimino)methylamino]-1-(5-phospho-beta-D-ribosyl)imidazole-4-carboxamide. It participates in amino-acid biosynthesis; L-histidine biosynthesis; L-histidine from 5-phospho-alpha-D-ribose 1-diphosphate: step 4/9. The chain is 1-(5-phosphoribosyl)-5-[(5-phosphoribosylamino)methylideneamino] imidazole-4-carboxamide isomerase from Aromatoleum aromaticum (strain DSM 19018 / LMG 30748 / EbN1) (Azoarcus sp. (strain EbN1)).